The sequence spans 419 residues: UPF0761 membrane protein ACIAD3168 (419 aa).

The next 6 helical transmembrane spans lie at 42–62 (ALTYTTLFAVVPMLTVFLVII), 105–125 (LTVIGILFLFVTTVMMLSTIE), 148–168 (WTIISLGPIILGSAFVISSTV), 186–206 (AFILWLISFGLTILGFFILYW), 212–232 (TVPMYAAIIAACFSAAIFELL), and 252–272 (AFAAIPIFLLWIFLSWNIVLL).

The protein belongs to the UPF0761 family.

The protein localises to the cell inner membrane. The polypeptide is UPF0761 membrane protein ACIAD3168 (Acinetobacter baylyi (strain ATCC 33305 / BD413 / ADP1)).